Consider the following 44-residue polypeptide: Cuticle protein CP466 (44 aa).

2 consecutive repeat copies span residues 3–20 (LLEGPSGVLFKDGQKKYL) and 27–44 (VLLTESGAVLSNGDNVQF).

As to expression, calcified shell.

This is Cuticle protein CP466 from Cancer pagurus (Rock crab).